We begin with the raw amino-acid sequence, 271 residues long: Putative glucose-6-phosphate 1-epimerase (271 aa).

Residues R71 and R93 each coordinate substrate. H151 is an active-site residue. D193 serves as a coordination point for substrate. The active site involves E249.

Belongs to the glucose-6-phosphate 1-epimerase family.

The catalysed reaction is alpha-D-glucose 6-phosphate = beta-D-glucose 6-phosphate. This is Putative glucose-6-phosphate 1-epimerase from Haemophilus influenzae (strain ATCC 51907 / DSM 11121 / KW20 / Rd).